The chain runs to 83 residues: UPF0248 protein TGAM_1209 (83 aa).

It belongs to the UPF0248 family.

This chain is UPF0248 protein TGAM_1209, found in Thermococcus gammatolerans (strain DSM 15229 / JCM 11827 / EJ3).